The following is a 200-amino-acid chain: Elongation factor Ts (200 aa).

The segment at 80–83 (TDFV) is involved in Mg(2+) ion dislocation from EF-Tu.

This sequence belongs to the EF-Ts family.

The protein localises to the cytoplasm. Functionally, associates with the EF-Tu.GDP complex and induces the exchange of GDP to GTP. It remains bound to the aminoacyl-tRNA.EF-Tu.GTP complex up to the GTP hydrolysis stage on the ribosome. This chain is Elongation factor Ts, found in Caldanaerobacter subterraneus subsp. tengcongensis (strain DSM 15242 / JCM 11007 / NBRC 100824 / MB4) (Thermoanaerobacter tengcongensis).